The primary structure comprises 209 residues: Glutathione S-transferase D1 (209 aa).

Residues 1-81 (MVDFYYLPGS…YLVEKYGKTD (81 aa)) enclose the GST N-terminal domain. Glutathione contacts are provided by residues S10, 51–53 (HTI), and 65–67 (ESR). Positions 87–208 (CPKKRAVINQ…AGCLEFKKYF (122 aa)) constitute a GST C-terminal domain.

Belongs to the GST superfamily. Delta family. Homodimer.

It catalyses the reaction RX + glutathione = an S-substituted glutathione + a halide anion + H(+). The enzyme catalyses 1,1,1-trichloro-2,2-bis(4-chlorophenyl)ethane = 1,1-dichloro-2,2-bis(4-chlorophenyl)ethylene + chloride + H(+). Functionally, conjugation of reduced glutathione to a wide number of exogenous and endogenous hydrophobic electrophiles. Has DDT dehydrochlorinase activity. May be involved in detoxification. This is Glutathione S-transferase D1 from Drosophila melanogaster (Fruit fly).